The sequence spans 978 residues: Alanine--tRNA ligase, chloroplastic/mitochondrial (978 aa).

Positions 655, 659, 758, and 762 each coordinate Zn(2+). A Glycyl lysine isopeptide (Lys-Gly) (interchain with G-Cter in ubiquitin) cross-link involves residue Lys-773.

Belongs to the class-II aminoacyl-tRNA synthetase family. In terms of assembly, monomer. Zn(2+) is required as a cofactor.

It localises to the plastid. Its subcellular location is the chloroplast. The protein resides in the mitochondrion. The catalysed reaction is tRNA(Ala) + L-alanine + ATP = L-alanyl-tRNA(Ala) + AMP + diphosphate. Functionally, catalyzes the attachment of alanine to tRNA(Ala) in a two-step reaction: alanine is first activated by ATP to form Ala-AMP and then transferred to the acceptor end of tRNA(Ala). Also edits incorrectly charged tRNA(Ala) via its editing domain. In Arabidopsis thaliana (Mouse-ear cress), this protein is Alanine--tRNA ligase, chloroplastic/mitochondrial (EMB86).